Here is a 444-residue protein sequence, read N- to C-terminus: Zinc protease PqqE (444 aa).

The first 28 residues, 1–28 (MKHFSVKRLLGLSSVLLVTLGASMHAQS), serve as a signal peptide directing secretion. Residue H78 coordinates Zn(2+). The Proton acceptor role is filled by E81. Residues H82 and E158 each contribute to the Zn(2+) site.

This sequence belongs to the peptidase M16 family. The cofactor is Zn(2+).

The protein resides in the secreted. Can function alone, but full activity requires the presence of the non-peptidase homolog YmxG. Its function is as follows. Virulence factor that cleaves the cytoplasmic domain of the human junctional adhesion molecule A (JAM-A), compromising gastric epithelial barrier function and cell-cell adhesion. Cleavage of JAM-A occurs after Ala-285 or, to a lesser extent, before Ala-285. This Helicobacter pylori (strain ATCC 700392 / 26695) (Campylobacter pylori) protein is Zinc protease PqqE.